The following is a 256-amino-acid chain: Imidazole glycerol phosphate synthase subunit HisF (256 aa).

Active-site residues include D12 and D131.

This sequence belongs to the HisA/HisF family. As to quaternary structure, heterodimer of HisH and HisF.

It localises to the cytoplasm. The enzyme catalyses 5-[(5-phospho-1-deoxy-D-ribulos-1-ylimino)methylamino]-1-(5-phospho-beta-D-ribosyl)imidazole-4-carboxamide + L-glutamine = D-erythro-1-(imidazol-4-yl)glycerol 3-phosphate + 5-amino-1-(5-phospho-beta-D-ribosyl)imidazole-4-carboxamide + L-glutamate + H(+). The protein operates within amino-acid biosynthesis; L-histidine biosynthesis; L-histidine from 5-phospho-alpha-D-ribose 1-diphosphate: step 5/9. Functionally, IGPS catalyzes the conversion of PRFAR and glutamine to IGP, AICAR and glutamate. The HisF subunit catalyzes the cyclization activity that produces IGP and AICAR from PRFAR using the ammonia provided by the HisH subunit. In Stutzerimonas stutzeri (strain A1501) (Pseudomonas stutzeri), this protein is Imidazole glycerol phosphate synthase subunit HisF.